The following is a 117-amino-acid chain: Large ribosomal subunit protein bL19 (117 aa).

The protein belongs to the bacterial ribosomal protein bL19 family.

This protein is located at the 30S-50S ribosomal subunit interface and may play a role in the structure and function of the aminoacyl-tRNA binding site. The sequence is that of Large ribosomal subunit protein bL19 from Vibrio parahaemolyticus serotype O3:K6 (strain RIMD 2210633).